Reading from the N-terminus, the 388-residue chain is Chorismate synthase (388 aa).

2 residues coordinate NADP(+): Arg-39 and Arg-45. Residues 130–132 (RSS), 251–252 (NA), Gly-296, 311–315 (KPIPT), and Arg-337 contribute to the FMN site.

Belongs to the chorismate synthase family. Homotetramer. It depends on FMNH2 as a cofactor.

It catalyses the reaction 5-O-(1-carboxyvinyl)-3-phosphoshikimate = chorismate + phosphate. Its pathway is metabolic intermediate biosynthesis; chorismate biosynthesis; chorismate from D-erythrose 4-phosphate and phosphoenolpyruvate: step 7/7. In terms of biological role, catalyzes the anti-1,4-elimination of the C-3 phosphate and the C-6 proR hydrogen from 5-enolpyruvylshikimate-3-phosphate (EPSP) to yield chorismate, which is the branch point compound that serves as the starting substrate for the three terminal pathways of aromatic amino acid biosynthesis. This reaction introduces a second double bond into the aromatic ring system. The sequence is that of Chorismate synthase from Streptococcus pyogenes serotype M49 (strain NZ131).